The primary structure comprises 198 residues: Charged multivesicular body protein 1a (198 aa).

Coiled coils occupy residues 7–41 (QLKF…QQKN) and 176–198 (GETS…ALRN). Positions 171-198 (GASALGETSARAQEKEDQLSRRLAALRN) are disordered. The MIT-interacting motif signature appears at 187-197 (DQLSRRLAALR).

It belongs to the SNF7 family. As to quaternary structure, probable peripherally associated component of the endosomal sorting required for transport complex III (ESCRT-III).

It is found in the cytoplasm. Its subcellular location is the endosome membrane. In terms of biological role, probable peripherally associated component of the endosomal sorting required for transport complex III (ESCRT-III) which is involved in multivesicular bodies (MVBs) formation and sorting of endosomal cargo proteins into MVBs. MVBs contain intraluminal vesicles (ILVs) that are generated by invagination and scission from the limiting membrane of the endosome and mostly are delivered to lysosomes enabling degradation of membrane proteins, such as stimulated growth factor receptors, lysosomal enzymes and lipids. This chain is Charged multivesicular body protein 1a (chmp1a), found in Danio rerio (Zebrafish).